Here is a 71-residue protein sequence, read N- to C-terminus: UPF0346 protein BCQ_2236 (71 aa).

The protein belongs to the UPF0346 family.

This is UPF0346 protein BCQ_2236 from Bacillus cereus (strain Q1).